The following is a 499-amino-acid chain: Dual specificity protein kinase CLK2 (499 aa).

Positions 1–67 (MPHPRRYHSS…SYDDRSSDRR (67 aa)) are disordered. A compositionally biased stretch (basic and acidic residues) spans 8–21 (HSSERGSRGSYREH). Residues 22–33 (YRSRKHKRRRSR) show a composition bias toward basic residues. Phosphoserine; by PKB/AKT1 is present on Ser-34. Residues 47–67 (REDSYHVRSRSSYDDRSSDRR) are compositionally biased toward basic and acidic residues. Ser-98 carries the phosphoserine modification. Position 99 is a phosphotyrosine; by autocatalysis (Tyr-99). The segment at 101–143 (YQRENSSYRSQRSSRRKHRRRRRRSRTFSRSSSQHSSRRAKSV) is disordered. Basic residues predominate over residues 112–127 (RSSRRKHRRRRRRSRT). Phosphothreonine; by PKB/AKT1 is present on Thr-127. Residue Ser-142 is modified to Phosphoserine; by autocatalysis. A Phosphotyrosine modification is found at Tyr-153. The 317-residue stretch at 163–479 (YEIVSTLGEG…LGEALQHPFF (317 aa)) folds into the Protein kinase domain. ATP contacts are provided by residues 169 to 177 (LGEGTFGRV) and Lys-193. Residue Asp-290 is the Proton acceptor of the active site. At Thr-344 the chain carries Phosphothreonine; by PKB/AKT2.

Belongs to the protein kinase superfamily. CMGC Ser/Thr protein kinase family. Lammer subfamily. In terms of assembly, interacts with RBMX. Interacts with AKT1 and UBL5. Post-translationally, autophosphorylates on all three types of residues. Phosphorylation on Ser-34 and Thr-127 by AKT1 is induced by ionizing radiation or insulin. Phosphorylation plays a critical role in cell proliferation following low dose radiation and prevents cell death following high dose radiation. Phosphorylation at Thr-344 by PKB/AKT2 induces its kinase activity which is required for its stability. The phosphorylation status at Ser-142 influences its subnuclear localization; inhibition of phosphorylation at Ser-142 results in accumulation in the nuclear speckle. Endothelial cells. Expressed in androgen-dependent prostate cancer cells.

The protein resides in the nucleus. The protein localises to the nucleus speckle. It carries out the reaction L-seryl-[protein] + ATP = O-phospho-L-seryl-[protein] + ADP + H(+). The catalysed reaction is L-threonyl-[protein] + ATP = O-phospho-L-threonyl-[protein] + ADP + H(+). The enzyme catalyses L-tyrosyl-[protein] + ATP = O-phospho-L-tyrosyl-[protein] + ADP + H(+). Its activity is regulated as follows. 5,6-dichloro-1-b-D-ribofuranosylbenzimidazole (DRB) inhibits autophosphorylation. TG003 inhibits its kinase activity and affects the regulation of alternative splicing mediated by phosphorylation of SR proteins. Its function is as follows. Dual specificity kinase acting on both serine/threonine and tyrosine-containing substrates. Phosphorylates serine- and arginine-rich (SR) proteins of the spliceosomal complex. May be a constituent of a network of regulatory mechanisms that enable SR proteins to control RNA splicing and can cause redistribution of SR proteins from speckles to a diffuse nucleoplasmic distribution. Acts as a suppressor of hepatic gluconeogenesis and glucose output by repressing PPARGC1A transcriptional activity on gluconeogenic genes via its phosphorylation. Phosphorylates PPP2R5B thereby stimulating the assembly of PP2A phosphatase with the PPP2R5B-AKT1 complex leading to dephosphorylation of AKT1. Phosphorylates: PTPN1, SRSF1 and SRSF3. Regulates the alternative splicing of tissue factor (F3) pre-mRNA in endothelial cells. Phosphorylates PAGE4 at several serine and threonine residues and this phosphorylation attenuates the ability of PAGE4 to potentiate the transcriptional activator activity of JUN. The sequence is that of Dual specificity protein kinase CLK2 (CLK2) from Homo sapiens (Human).